The following is an 840-amino-acid chain: MSVVGIDLGFQSCYVAVARAGGIETIANEYSDRCTPACVSFGPKNRSVGAAAKSQVISNAKNTVQGFKRFHGRAFSDPFVEAEKSNLAYDIVQLPTGLTGIKVTYMEEERNFTTEQVTAMLLSKLKETAESVLKKPVVDCVVSVPSFYTDAERRSVMDATQIAGLNCLRLMNETTAVALAYGIYKQDLPALEEKPRNVVFVDMGHSAYQVSVCAFNRGKLKVLATAFDTTLGGRKFDEVLVNHFCEEFGKKYKLDIKSKVRALLRLSQECEKLKKLMSANASDLPLSIECFMNDIDVSGTMNRGKFLEMCDDLLARVEPPLRSILDQSKLKKEDIYAVEIVGGATRIPAVKEKISKFFGKELSTTLNADEAVTRGCALQCAILSPAFKVREFSITDVVPYPISLRWNSPAEEGSSDCEVFPKNHAAPFSKVLTFYRKEPFTLEAYYSSPQDLPYPDPAIAQFSVQKVTPQSDGSSSKVKVKVRVNVHGIFSVSSAALVEVHKSEESEEPMETDQNAKEEEKMQVDQEEPHTEEQQPQTPAENKAESEEMETSQAGSKDKKMDQPPQAKKAKVKTSTVDLPIESQLLWQLDREMLGLYTENEGKMIMQDKLEKERNDAKNAVEEYVYEMRDKLSGEYEKFVSEDDRNNFTLKLEDTENWLYEDGEDQPKQVYVDKLAELRTLGQPIKTRFQESEERPKLFEELGKQIQQYMKVISSFKNKEDQYEHLDAADMTKVEKSTNEAMEWMNSKLNLQNKQSLTADPVVKTKEIEAKIKELTNICSPIISKPKPKVEPPKEEPKHAEQNGPVDGQGDNPGTQAAEHGADTAVPSDGDKKLPEMDID.

N6-acetyllysine is present on lysine 53. The residue at position 76 (serine 76) is a Phosphoserine. 2 positions are modified to phosphotyrosine: tyrosine 89 and tyrosine 336. 2 positions are modified to phosphoserine: serine 393 and serine 415. The residue at position 430 (lysine 430) is an N6-acetyllysine. Positions 500–575 (VHKSEESEEP…QAKKAKVKTS (76 aa)) are disordered. A compositionally biased stretch (basic and acidic residues) spans 514 to 533 (QNAKEEEKMQVDQEEPHTEE). Threonine 538 carries the phosphothreonine modification. Serine 546 carries the phosphoserine modification. Tyrosine 660 carries the phosphotyrosine modification. At serine 756 the chain carries Phosphoserine. An N6-methyllysine modification is found at lysine 773. The segment at 781–840 (PIISKPKPKVEPPKEEPKHAEQNGPVDGQGDNPGTQAAEHGADTAVPSDGDKKLPEMDID) is disordered. Basic and acidic residues-rich tracts occupy residues 788–801 (PKVE…KHAE) and 829–840 (DGDKKLPEMDID).

It belongs to the heat shock protein 70 family. Interacts with TJP1/ZO-1. As to expression, ubiquitous. Highly expressed in testis.

It localises to the cytoplasm. The protein is Heat shock 70 kDa protein 4 (Hspa4) of Rattus norvegicus (Rat).